The primary structure comprises 228 residues: L-ribulose-5-phosphate 4-epimerase UlaF (228 aa).

Residues 26–27, 43–44, and 72–73 contribute to the substrate site; these read GN, SG, and SS. Zn(2+)-binding residues include D74, H93, and H95. Residue D118 is the Proton donor/acceptor of the active site. H167 provides a ligand contact to Zn(2+). Y225 functions as the Proton donor/acceptor in the catalytic mechanism.

This sequence belongs to the aldolase class II family. AraD/FucA subfamily. Requires Zn(2+) as cofactor.

It catalyses the reaction L-ribulose 5-phosphate = D-xylulose 5-phosphate. It participates in cofactor degradation; L-ascorbate degradation; D-xylulose 5-phosphate from L-ascorbate: step 4/4. Catalyzes the isomerization of L-ribulose 5-phosphate to D-xylulose 5-phosphate. Is involved in the anaerobic L-ascorbate utilization. The protein is L-ribulose-5-phosphate 4-epimerase UlaF of Shigella sonnei (strain Ss046).